Consider the following 462-residue polypeptide: Protein phosphatase 1M (462 aa).

Positions 1–10 (MSAGWFRRRF) are enriched in basic residues. The tract at residues 1–66 (MSAGWFRRRF…PVRSPARGRT (66 aa)) is disordered. A PPM-type phosphatase domain is found at 100 to 452 (EFGIEEDQEW…DDVSVFVIPL (353 aa)). Asp-127 and Gly-128 together coordinate Mn(2+).

This sequence belongs to the PP2C family. Requires Mg(2+) as cofactor. It depends on Mn(2+) as a cofactor. Widely expressed with highest levels in testis and lower levels in lung, kidney and brain.

The protein localises to the nucleus. It catalyses the reaction O-phospho-L-seryl-[protein] + H2O = L-seryl-[protein] + phosphate. The catalysed reaction is O-phospho-L-threonyl-[protein] + H2O = L-threonyl-[protein] + phosphate. The protein is Protein phosphatase 1M of Mus musculus (Mouse).